Here is a 505-residue protein sequence, read N- to C-terminus: Beta-glucosidase 18 (505 aa).

The signal sequence occupies residues 1 to 26 (MAGGSKTRIHASLVSTLLLLLPLASA). Residue Gln-46 coordinates a beta-D-glucoside. N-linked (GlcNAc...) asparagine glycosylation occurs at Asn-55. A beta-D-glucoside-binding positions include His-148 and 193–194 (NE). Glu-194 functions as the Proton donor in the catalytic mechanism. A disulfide bond links Cys-213 and Cys-220. Tyr-337 is a binding site for a beta-D-glucoside. The cysteines at positions 345 and 350 are disulfide-linked. A beta-D-glucoside contacts are provided by residues Glu-408, Trp-457, 464–465 (EW), and Phe-473. Glu-408 acts as the Nucleophile in catalysis.

Belongs to the glycosyl hydrolase 1 family. In terms of tissue distribution, expressed in roots, leaves, flowers and pollen.

It carries out the reaction Hydrolysis of terminal, non-reducing beta-D-glucosyl residues with release of beta-D-glucose.. Its function is as follows. Hydrolyzes glycosides and monolignol glucosides. Can hydrolyze para-nitrophenyl beta-D-glucopyranoside (pNPGlc) in vitro. Hydrolyzes para-nitrophenyl beta-D-fucopyranoside, para-nitrophenyl beta-D-galactopyranoside and para-nitrophenyl beta-D-xylopyranoside in vitro. Hydrolyzes the monolignol glucosides coniferin and syringin with high catalytic efficiencies. The chain is Beta-glucosidase 18 from Oryza sativa subsp. japonica (Rice).